Consider the following 154-residue polypeptide: Ribosome maturation factor RimP (154 aa).

Belongs to the RimP family.

It is found in the cytoplasm. Functionally, required for maturation of 30S ribosomal subunits. In Acetivibrio thermocellus (strain ATCC 27405 / DSM 1237 / JCM 9322 / NBRC 103400 / NCIMB 10682 / NRRL B-4536 / VPI 7372) (Clostridium thermocellum), this protein is Ribosome maturation factor RimP.